The sequence spans 336 residues: MIEADRLISAGTTLPEDVADRAIRPKLLEEYVGQPQVRSQMEIFIKAAKLRGDALDHLLIFGPPGLGKTTLANIVANEMGVNLRTTSGPVLEKAGDLAAMLTNLEPHDVLFIDEIHRLSPVVEEVLYPAMEDYQLDIIIGEGPAARSIKIDLPPFTLIGATTRAGSLTSPLRDRFGIVQRLEFYQVPDLQYIVSRSARFMGLEMSDDGALEVARRARGTPRIANRLLRRVRDFAEVKHDGTISADIAAQALDMLNVDAEGFDYMDRKLLLAVIDKFFGGPVGLDNLAAAIGEERETIEDVLEPYLIQQGFLQRTPRGRMATTRAWNHFGITPPEMP.

The segment at 4 to 184 (ADRLISAGTT…FGIVQRLEFY (181 aa)) is large ATPase domain (RuvB-L). Residues isoleucine 23, arginine 24, glycine 65, lysine 68, threonine 69, threonine 70, 131–133 (EDY), arginine 174, tyrosine 184, and arginine 221 each bind ATP. Residue threonine 69 participates in Mg(2+) binding. Residues 185–255 (QVPDLQYIVS…IAAQALDMLN (71 aa)) form a small ATPAse domain (RuvB-S) region. The tract at residues 258–336 (AEGFDYMDRK…HFGITPPEMP (79 aa)) is head domain (RuvB-H). The DNA site is built by arginine 294, arginine 313, and arginine 318.

Belongs to the RuvB family. In terms of assembly, homohexamer. Forms an RuvA(8)-RuvB(12)-Holliday junction (HJ) complex. HJ DNA is sandwiched between 2 RuvA tetramers; dsDNA enters through RuvA and exits via RuvB. An RuvB hexamer assembles on each DNA strand where it exits the tetramer. Each RuvB hexamer is contacted by two RuvA subunits (via domain III) on 2 adjacent RuvB subunits; this complex drives branch migration. In the full resolvosome a probable DNA-RuvA(4)-RuvB(12)-RuvC(2) complex forms which resolves the HJ.

It localises to the cytoplasm. It carries out the reaction ATP + H2O = ADP + phosphate + H(+). In terms of biological role, the RuvA-RuvB-RuvC complex processes Holliday junction (HJ) DNA during genetic recombination and DNA repair, while the RuvA-RuvB complex plays an important role in the rescue of blocked DNA replication forks via replication fork reversal (RFR). RuvA specifically binds to HJ cruciform DNA, conferring on it an open structure. The RuvB hexamer acts as an ATP-dependent pump, pulling dsDNA into and through the RuvAB complex. RuvB forms 2 homohexamers on either side of HJ DNA bound by 1 or 2 RuvA tetramers; 4 subunits per hexamer contact DNA at a time. Coordinated motions by a converter formed by DNA-disengaged RuvB subunits stimulates ATP hydrolysis and nucleotide exchange. Immobilization of the converter enables RuvB to convert the ATP-contained energy into a lever motion, pulling 2 nucleotides of DNA out of the RuvA tetramer per ATP hydrolyzed, thus driving DNA branch migration. The RuvB motors rotate together with the DNA substrate, which together with the progressing nucleotide cycle form the mechanistic basis for DNA recombination by continuous HJ branch migration. Branch migration allows RuvC to scan DNA until it finds its consensus sequence, where it cleaves and resolves cruciform DNA. This Shigella boydii serotype 18 (strain CDC 3083-94 / BS512) protein is Holliday junction branch migration complex subunit RuvB.